The sequence spans 227 residues: 7-cyano-7-deazaguanine synthase (227 aa).

8–18 (LSGGTDSATVL) is a binding site for ATP. Zn(2+) contacts are provided by Cys192, Cys202, Cys205, and Cys208.

The protein belongs to the QueC family. Zn(2+) is required as a cofactor.

The catalysed reaction is 7-carboxy-7-deazaguanine + NH4(+) + ATP = 7-cyano-7-deazaguanine + ADP + phosphate + H2O + H(+). The protein operates within purine metabolism; 7-cyano-7-deazaguanine biosynthesis. Catalyzes the ATP-dependent conversion of 7-carboxy-7-deazaguanine (CDG) to 7-cyano-7-deazaguanine (preQ(0)). This Rickettsia prowazekii (strain Madrid E) protein is 7-cyano-7-deazaguanine synthase.